The following is a 344-amino-acid chain: Meiotic recombination protein DMC1 homolog (344 aa).

The disordered stretch occupies residues 1-22; sequence MMASLKAEETSQMQLVEREEND. 133-140 is a binding site for ATP; it reads GEFRSGKT. Arginine 235 provides a ligand contact to dsDNA. SsDNA-binding residues include arginine 235, phenylalanine 238, arginine 241, arginine 247, and arginine 315. Residues arginine 241 and arginine 247 each contribute to the dsDNA site.

The protein belongs to the RecA family. DMC1 subfamily. Double stacked ring-shaped homooctamer. Interacts with BRCA2A and BRCA2B. In terms of tissue distribution, expressed in mitotic and/or meiotic tissues. Expressed in roots, leaves and anthers and carpels of young fower buds.

It localises to the nucleus. Its function is as follows. May participate in meiotic recombination, specifically in homologous strand assimilation, which is required for the resolution of meiotic double-strand breaks. Mediates interhomolog recombination during meiosis. The protein is Meiotic recombination protein DMC1 homolog of Arabidopsis thaliana (Mouse-ear cress).